A 334-amino-acid chain; its full sequence is Probable fructose-bisphosphate aldolase class 1 (334 aa).

It belongs to the class I fructose-bisphosphate aldolase family.

The catalysed reaction is beta-D-fructose 1,6-bisphosphate = D-glyceraldehyde 3-phosphate + dihydroxyacetone phosphate. The protein operates within carbohydrate degradation; glycolysis; D-glyceraldehyde 3-phosphate and glycerone phosphate from D-glucose: step 4/4. This Xylella fastidiosa (strain 9a5c) protein is Probable fructose-bisphosphate aldolase class 1.